Consider the following 159-residue polypeptide: Abscisic acid and environmental stress-inducible protein (159 aa).

6 tandem repeats follow at residues 38–49 (GGGYNHGGGGYN), 50–61 (GGGYNHGGGGYN), 63–74 (GGGYNHGGGGYN), 77–88 (GGGYNHGGGGYN), 91–102 (GGGYNHGGGGYN), and 105–116 (GGGYNHGGGGYN). A 7 X 12 AA repeats of G-G-G-Y-N-H-G-G-G-Y-N region spans residues 38–135 (GGGYNHGGGG…GYNHGGGGCQ (98 aa)). A 7; approximate repeat occupies 124–135 (GGGYNHGGGGCQ).

The protein belongs to the GRP family.

The polypeptide is Abscisic acid and environmental stress-inducible protein (Medicago sativa subsp. falcata (Sickle medic)).